A 183-amino-acid polypeptide reads, in one-letter code: MVLKDNVIDNWANALTKIAVKENKVKKMLEQAHVLIEVLKNKNEFVDILTFKSAHDEEKRIKIIDDTFSQFNIDEDIMNAFKILVHMQAFVNARDILKKLRGKLVELDNMTYGVVWSTEEISAAQIKEIEEKMSKKINKEVKLVNKIDTKLIAGIQVVVHNKVYDGSLRSKLDEMKYQVLKEK.

This sequence belongs to the ATPase delta chain family. As to quaternary structure, F-type ATPases have 2 components, F(1) - the catalytic core - and F(0) - the membrane proton channel. F(1) has five subunits: alpha(3), beta(3), gamma(1), delta(1), epsilon(1). F(0) has three main subunits: a(1), b(2) and c(10-14). The alpha and beta chains form an alternating ring which encloses part of the gamma chain. F(1) is attached to F(0) by a central stalk formed by the gamma and epsilon chains, while a peripheral stalk is formed by the delta and b chains.

The protein localises to the cell membrane. F(1)F(0) ATP synthase produces ATP from ADP in the presence of a proton or sodium gradient. F-type ATPases consist of two structural domains, F(1) containing the extramembraneous catalytic core and F(0) containing the membrane proton channel, linked together by a central stalk and a peripheral stalk. During catalysis, ATP synthesis in the catalytic domain of F(1) is coupled via a rotary mechanism of the central stalk subunits to proton translocation. In terms of biological role, this protein is part of the stalk that links CF(0) to CF(1). It either transmits conformational changes from CF(0) to CF(1) or is implicated in proton conduction. The polypeptide is ATP synthase subunit delta (Mesoplasma florum (strain ATCC 33453 / NBRC 100688 / NCTC 11704 / L1) (Acholeplasma florum)).